A 147-amino-acid polypeptide reads, in one-letter code: Small ribosomal subunit protein uS5 (147 aa).

The S5 DRBM domain occupies 9-72; it reads FEEVIVDIGR…DDAFKNIIHV (64 aa).

The protein belongs to the universal ribosomal protein uS5 family. In terms of assembly, part of the 30S ribosomal subunit. Contacts proteins S4 and S8.

Its function is as follows. With S4 and S12 plays an important role in translational accuracy. Located at the back of the 30S subunit body where it stabilizes the conformation of the head with respect to the body. This chain is Small ribosomal subunit protein uS5, found in Campylobacter concisus (strain 13826).